Consider the following 189-residue polypeptide: Resolvase (189 aa).

The region spanning 1–139 (MLVGYARVST…EGLRSAKARG (139 aa)) is the Resolvase/invertase-type recombinase catalytic domain. Serine 9 (O-(5'-phospho-DNA)-serine intermediate) is an active-site residue. Positions 130–151 (EGLRSAKARGRNGGRPSKRNDK) are disordered. The H-T-H motif DNA-binding region spans 165–184 (IVDIVKQTELSRATVYRILK).

The protein belongs to the site-specific recombinase resolvase family.

In terms of biological role, a likely role for the res protein would be to stabilize pCP13 by reducing the number of plasmid multimers resulting from homologous recombination. The chain is Resolvase (res) from Clostridium perfringens (strain 13 / Type A).